The chain runs to 259 residues: 3'-5' ssDNA/RNA exonuclease TatD (259 aa).

Residues glutamate 92, histidine 128, and histidine 153 each coordinate a divalent metal cation.

This sequence belongs to the metallo-dependent hydrolases superfamily. TatD-type hydrolase family. TatD subfamily. Monomer. The cofactor is Mg(2+).

The protein localises to the cytoplasm. 3'-5' exonuclease that prefers single-stranded DNA and RNA. May play a role in the H(2)O(2)-induced DNA damage repair. The chain is 3'-5' ssDNA/RNA exonuclease TatD from Erwinia amylovora (strain ATCC 49946 / CCPPB 0273 / Ea273 / 27-3).